The sequence spans 314 residues: Protein nutcracker (314 aa).

A disordered region spans residues 1–62; it reads MSDTKSEIEG…PRLIQEKSTQ (62 aa). Low complexity predominate over residues 21–34; that stretch reads QQQQQPQQQQNEQQ. Residues 257-314 are required for interaction with skpA and Cul1, but not with PI31; the sequence is MQMEMKLQPSLLGLPDELYFEIFRYLDKSQLNVVARVNRHLHFYSKEVERKRLKGGRS. The region spanning 264–309 is the F-box domain; the sequence is QPSLLGLPDELYFEIFRYLDKSQLNVVARVNRHLHFYSKEVERKRL.

Component of an SCF (SKP1-CUL1-F-box protein) E3 ubiquitin-protein ligase complex, at least composed of ntc, skpA and Cul1. Interacts (via F-box domain) with skpA and Cul1. Interacts with Prosalpha7 and PI31. Interacts with Bruce. Expressed in testis (at protein level).

The protein resides in the cytoplasm. Functions together with PI31 to control non-apoptotic caspase activation during sperm individualization. Positively regulates PI31 stability. This chain is Protein nutcracker, found in Drosophila melanogaster (Fruit fly).